Here is a 340-residue protein sequence, read N- to C-terminus: HPr kinase/phosphorylase (340 aa).

Active-site residues include His153 and Lys174. ATP is bound at residue 168–175 (GRSGIGKS). Ser175 contacts Mg(2+). The Proton acceptor; for phosphorylation activity. Proton donor; for dephosphorylation activity role is filled by Asp192. The interval 216-225 (MEIRGLGIID) is important for the catalytic mechanism of both phosphorylation and dephosphorylation. Glu217 is a binding site for Mg(2+). Residue Arg258 is part of the active site. An important for the catalytic mechanism of dephosphorylation region spans residues 279 to 284 (PIYPGK).

This sequence belongs to the HPrK/P family. As to quaternary structure, homohexamer. The cofactor is Mg(2+).

The catalysed reaction is [HPr protein]-L-serine + ATP = [HPr protein]-O-phospho-L-serine + ADP + H(+). It carries out the reaction [HPr protein]-O-phospho-L-serine + phosphate + H(+) = [HPr protein]-L-serine + diphosphate. Functionally, catalyzes the ATP- as well as the pyrophosphate-dependent phosphorylation of a specific serine residue in HPr, a phosphocarrier protein of the phosphoenolpyruvate-dependent sugar phosphotransferase system (PTS). HprK/P also catalyzes the pyrophosphate-producing, inorganic phosphate-dependent dephosphorylation (phosphorolysis) of seryl-phosphorylated HPr (P-Ser-HPr). The chain is HPr kinase/phosphorylase from Chloroherpeton thalassium (strain ATCC 35110 / GB-78).